Consider the following 279-residue polypeptide: Energy-coupling factor transporter ATP-binding protein EcfA (279 aa).

Positions 4-239 constitute an ABC transporter domain; sequence VETKDLYFRY…VETIRKANLR (236 aa). ATP is bound at residue 37–44; sequence GPNGAGKS.

It belongs to the ABC transporter superfamily. Energy-coupling factor EcfA family. As to quaternary structure, forms a stable energy-coupling factor (ECF) transporter complex composed of 2 membrane-embedded substrate-binding proteins (S component), 2 ATP-binding proteins (A component) and 2 transmembrane proteins (T component).

The protein resides in the cell membrane. ATP-binding (A) component of a common energy-coupling factor (ECF) ABC-transporter complex. Unlike classic ABC transporters this ECF transporter provides the energy necessary to transport a number of different substrates. In Methanocaldococcus jannaschii (strain ATCC 43067 / DSM 2661 / JAL-1 / JCM 10045 / NBRC 100440) (Methanococcus jannaschii), this protein is Energy-coupling factor transporter ATP-binding protein EcfA.